An 85-amino-acid polypeptide reads, in one-letter code: Oxytocin-neurophysin 1 (85 aa).

Gly3 carries the post-translational modification Glycine amide. Disulfide bonds link Cys16/Cys60, Cys19/Cys33, Cys27/Cys50, Cys34/Cys40, Cys67/Cys79, and Cys80/Cys85.

This sequence belongs to the vasopressin/oxytocin family. In terms of assembly, interacts with oxytocin receptor (Ki=1.5 nM). Interacts with vasopressin V1aR/AVPR1A (Ki=37 nM), V1bR/AVPR1B (Ki=222 nM), and V2R/AVPR2 receptors (Ki=823 nM).

In terms of biological role, neurophysin 1 specifically binds oxytocin. Its function is as follows. Oxytocin causes contraction of the smooth muscle of the uterus and of the mammary gland. Acts by binding to oxytocin receptor (OXTR). The chain is Oxytocin-neurophysin 1 (OXT) from Papio hamadryas (Hamadryas baboon).